We begin with the raw amino-acid sequence, 282 residues long: DegV domain-containing protein SPy_0865/M5005_Spy0672 (282 aa).

The region spanning 3-280 (LAVITDSTAT…EGAIAFGVTP (278 aa)) is the DegV domain. Hexadecanoate contacts are provided by T61 and S94.

In terms of biological role, may bind long-chain fatty acids, such as palmitate, and may play a role in lipid transport or fatty acid metabolism. The protein is DegV domain-containing protein SPy_0865/M5005_Spy0672 of Streptococcus pyogenes serotype M1.